The chain runs to 445 residues: GTPase Der (445 aa).

EngA-type G domains lie at 3-167 (PVIA…YAGQ) and 180-353 (VKIA…AAAM). GTP-binding positions include 9 to 16 (GRPNVGKS), 56 to 60 (DTGGF), 119 to 122 (NKAE), 186 to 193 (GRPNVGKS), 233 to 237 (DTAGL), and 298 to 301 (NKWD). A KH-like domain is found at 354 to 438 (AKLPTPKLTR…PLRIEFRSST (85 aa)).

The protein belongs to the TRAFAC class TrmE-Era-EngA-EngB-Septin-like GTPase superfamily. EngA (Der) GTPase family. In terms of assembly, associates with the 50S ribosomal subunit.

GTPase that plays an essential role in the late steps of ribosome biogenesis. This is GTPase Der from Paraburkholderia phytofirmans (strain DSM 17436 / LMG 22146 / PsJN) (Burkholderia phytofirmans).